Reading from the N-terminus, the 139-residue chain is MAIKYFLLVNIRGKTRLSQYYESIPFEERPAMESEIIRKCLSRTEIQCSFVEYKDYKVIYRKYATLFFIVGVDTTENELAILELIHNYVEILDSCFDNVIMFNLDKAHFILDEMVSNGDIVEISKQHILEFVNLLYKQE.

It belongs to the adaptor complexes small subunit family. In terms of assembly, may be part of the adaptor protein complex 4 (AP-4), a heterotetramer composed of two large adaptins (epsilon-type subunitand beta-type subunit), a medium adaptin (mu-type subunit) and a small adaptin (sigma-type).

The protein localises to the golgi apparatus. It is found in the trans-Golgi network membrane. Its function is as follows. Probable component of an adaptor protein complex. Adaptor protein complexes are vesicle coat components involved both in vesicle formation and cargo selection. They control the vesicular transport of proteins in different trafficking pathways. The polypeptide is AP-4 complex subunit sigma (Dictyostelium discoideum (Social amoeba)).